A 187-amino-acid polypeptide reads, in one-letter code: MKQKLLELILTHAYRYSEQPFTLASGKKSRHYFNCKEITLVPDRLELLCKFIVERHLDESGILKPQAFGGLTMGADPICYGISLEFRKQDKNIYPLIVRKFSKDHGTNKLVEGAVHEVKSCVIVDDVITTGGSTIQAIRSMRDSGIVVVQGVCILDRQEGGMDAILAEGVQMFPIFKKSDFGNLEHE.

5-phospho-alpha-D-ribose 1-diphosphate is bound by residues Arg99, Lys100, Lys103, His105, and 125–133 (DDVITTGGS). Residues Thr129 and Arg157 each coordinate orotate.

Belongs to the purine/pyrimidine phosphoribosyltransferase family. PyrE subfamily. In terms of assembly, homodimer. Requires Mg(2+) as cofactor.

It carries out the reaction orotidine 5'-phosphate + diphosphate = orotate + 5-phospho-alpha-D-ribose 1-diphosphate. The protein operates within pyrimidine metabolism; UMP biosynthesis via de novo pathway; UMP from orotate: step 1/2. Its function is as follows. Catalyzes the transfer of a ribosyl phosphate group from 5-phosphoribose 1-diphosphate to orotate, leading to the formation of orotidine monophosphate (OMP). This Leptospira borgpetersenii serovar Hardjo-bovis (strain L550) protein is Orotate phosphoribosyltransferase.